Consider the following 502-residue polypeptide: Cobyric acid synthase (502 aa).

The region spanning 260–433 (ILRVAVCAIP…WHGSLESDGF (174 aa)) is the GATase cobBQ-type domain. Cys341 serves as the catalytic Nucleophile. His425 is a catalytic residue.

It belongs to the CobB/CobQ family. CobQ subfamily.

It functions in the pathway cofactor biosynthesis; adenosylcobalamin biosynthesis. Its function is as follows. Catalyzes amidations at positions B, D, E, and G on adenosylcobyrinic A,C-diamide. NH(2) groups are provided by glutamine, and one molecule of ATP is hydrogenolyzed for each amidation. This Streptomyces avermitilis (strain ATCC 31267 / DSM 46492 / JCM 5070 / NBRC 14893 / NCIMB 12804 / NRRL 8165 / MA-4680) protein is Cobyric acid synthase.